Consider the following 218-residue polypeptide: Thiamine-phosphate synthase (218 aa).

4-amino-2-methyl-5-(diphosphooxymethyl)pyrimidine-binding positions include Gln-45–Lys-49 and Asn-77. Positions 78 and 97 each coordinate Mg(2+). Ser-116 contacts 4-amino-2-methyl-5-(diphosphooxymethyl)pyrimidine. Thr-142 to Thr-144 lines the 2-[(2R,5Z)-2-carboxy-4-methylthiazol-5(2H)-ylidene]ethyl phosphate pocket. Lys-145 is a binding site for 4-amino-2-methyl-5-(diphosphooxymethyl)pyrimidine. 2-[(2R,5Z)-2-carboxy-4-methylthiazol-5(2H)-ylidene]ethyl phosphate-binding positions include Gly-173 and Val-193–Thr-194.

The protein belongs to the thiamine-phosphate synthase family. It depends on Mg(2+) as a cofactor.

It catalyses the reaction 2-[(2R,5Z)-2-carboxy-4-methylthiazol-5(2H)-ylidene]ethyl phosphate + 4-amino-2-methyl-5-(diphosphooxymethyl)pyrimidine + 2 H(+) = thiamine phosphate + CO2 + diphosphate. The enzyme catalyses 2-(2-carboxy-4-methylthiazol-5-yl)ethyl phosphate + 4-amino-2-methyl-5-(diphosphooxymethyl)pyrimidine + 2 H(+) = thiamine phosphate + CO2 + diphosphate. It carries out the reaction 4-methyl-5-(2-phosphooxyethyl)-thiazole + 4-amino-2-methyl-5-(diphosphooxymethyl)pyrimidine + H(+) = thiamine phosphate + diphosphate. It functions in the pathway cofactor biosynthesis; thiamine diphosphate biosynthesis; thiamine phosphate from 4-amino-2-methyl-5-diphosphomethylpyrimidine and 4-methyl-5-(2-phosphoethyl)-thiazole: step 1/1. In terms of biological role, condenses 4-methyl-5-(beta-hydroxyethyl)thiazole monophosphate (THZ-P) and 2-methyl-4-amino-5-hydroxymethyl pyrimidine pyrophosphate (HMP-PP) to form thiamine monophosphate (TMP). This Pelotomaculum thermopropionicum (strain DSM 13744 / JCM 10971 / SI) protein is Thiamine-phosphate synthase.